The primary structure comprises 733 residues: SWR1-complex protein 4 (733 aa).

Disordered stretches follow at residues 1–34 (MTSH…RPNL) and 98–128 (PDGT…DSSF). In terms of domain architecture, SANT spans 146-217 (NTNLKHPDWT…DLKARYYEVA (72 aa)). The stretch at 247–299 (KQEQNRKRFAENTLKRSSDEAREEEALLLEIKRIMARTERFNEERRELYNRLD) forms a coiled coil. Over residues 371 to 384 (AASRRESLAASSTA) the composition is skewed to low complexity. 2 disordered regions span residues 371–488 (AASR…GSGP) and 564–733 (KKAE…KQKK). Composition is skewed to basic and acidic residues over residues 387-423 (NDHH…DRHG), 463-484 (PERR…HDRL), 564-589 (KKAE…KGGE), and 610-653 (DDAK…KGEE). The span at 699–710 (GSSSGAGASSGA) shows a compositional bias: low complexity.

The protein belongs to the SWC4 family. In terms of assembly, component of the SWR1 chromatin-remodeling complex and of the NuA4 histone acetyltransferase complex.

Its subcellular location is the nucleus. Its function is as follows. Component of the SWR1 complex which mediates the ATP-dependent exchange of histone H2A for the H2A variant H2A.Z leading to transcriptional regulation of selected genes by chromatin remodeling. Component of the NuA4 histone acetyltransferase complex which is involved in transcriptional activation of selected genes principally by acetylation of nucleosomal histone H4 and H2A. The NuA4 complex is also involved in DNA repair. The protein is SWR1-complex protein 4 (crc-1) of Neurospora crassa (strain ATCC 24698 / 74-OR23-1A / CBS 708.71 / DSM 1257 / FGSC 987).